Reading from the N-terminus, the 224-residue chain is UPF0758 protein CBUD_1789 (224 aa).

Residues 102-224 (QLGCTQDAQQ…SFSFAESGLL (123 aa)) enclose the MPN domain. Residues His-173, His-175, and Asp-186 each coordinate Zn(2+). The JAMM motif signature appears at 173 to 186 (HNHPSGVPDPSQAD).

The protein belongs to the UPF0758 family.

This chain is UPF0758 protein CBUD_1789, found in Coxiella burnetii (strain Dugway 5J108-111).